A 250-amino-acid chain; its full sequence is MVAVPARYASTRLPGKPLQLIGDRPMIQHVAERALAAGAREVWVATDDARIAEAIQGLAGVRVAMTSSVHLSGTDRLAECARIAGWDAATCVVNLQGDEPFAPAAGIRAVAQVLQRSGAEMATLAAPVDSAHDLFDPNVVKLVRNAHGDALYFSRAPIPWHRDSFAAQRDAVPAGNHWLRHIGIYAYRAGFLQQFAAMPPGTLERIESLEQLRVLEAGYRIAVALTPEQFPPGIDTPEDLQRAQAQLASA.

The protein belongs to the KdsB family.

Its subcellular location is the cytoplasm. The catalysed reaction is 3-deoxy-alpha-D-manno-oct-2-ulosonate + CTP = CMP-3-deoxy-beta-D-manno-octulosonate + diphosphate. It participates in nucleotide-sugar biosynthesis; CMP-3-deoxy-D-manno-octulosonate biosynthesis; CMP-3-deoxy-D-manno-octulosonate from 3-deoxy-D-manno-octulosonate and CTP: step 1/1. The protein operates within bacterial outer membrane biogenesis; lipopolysaccharide biosynthesis. Its function is as follows. Activates KDO (a required 8-carbon sugar) for incorporation into bacterial lipopolysaccharide in Gram-negative bacteria. This is 3-deoxy-manno-octulosonate cytidylyltransferase from Xanthomonas campestris pv. campestris (strain 8004).